We begin with the raw amino-acid sequence, 420 residues long: Fasciclin-like arabinogalactan protein 8 (420 aa).

Positions 1 to 25 (MAASQTFSLLAFTFSLLAFASTVSS) are cleaved as a signal peptide. FAS1 domains are found at residues 26–172 (HNIT…DAPI) and 186–326 (SLSN…DNVL). Asn-27, Asn-128, Asn-162, Asn-189, and Asn-273 each carry an N-linked (GlcNAc...) asparagine glycan. The segment at 335-394 (SKSPSPAPAPEPVTAPTPSPADAPSPTAASPPAPPTDESPESAPSDSPTGSANSKSANAA) is disordered. The span at 339–371 (SPAPAPEPVTAPTPSPADAPSPTAASPPAPPTD) shows a compositional bias: pro residues. Asn-392 is lipidated: GPI-anchor amidated asparagine. Positions 393-420 (AAVGVSTPSLFTALVTIAAIAVSVSLCS) are cleaved as a propeptide — removed in mature form.

The protein belongs to the fasciclin-like AGP family. Expressed mainly in flowers and to a lesser extent in leaves and roots.

Its subcellular location is the cell membrane. Its function is as follows. May be a cell surface adhesion protein. This is Fasciclin-like arabinogalactan protein 8 (FLA8) from Arabidopsis thaliana (Mouse-ear cress).